The sequence spans 173 residues: ATP-dependent protease subunit HslV (173 aa).

Residue T2 is part of the active site. Residues G158, D161, and S164 each coordinate Na(+).

It belongs to the peptidase T1B family. HslV subfamily. A double ring-shaped homohexamer of HslV is capped on each side by a ring-shaped HslU homohexamer. The assembly of the HslU/HslV complex is dependent on binding of ATP.

It is found in the cytoplasm. The enzyme catalyses ATP-dependent cleavage of peptide bonds with broad specificity.. Allosterically activated by HslU binding. Protease subunit of a proteasome-like degradation complex believed to be a general protein degrading machinery. In Haemophilus ducreyi (strain 35000HP / ATCC 700724), this protein is ATP-dependent protease subunit HslV.